The primary structure comprises 144 residues: Large ribosomal subunit protein uL15 (144 aa).

Residues 1–56 (MELNNLKPAAGAKHAKRRVGRGIGSGLGKTAGRGHKGQKSRSGGFHKVGFEGGQMP) are disordered. Over residues 21–31 (RGIGSGLGKTA) the composition is skewed to gly residues.

It belongs to the universal ribosomal protein uL15 family. In terms of assembly, part of the 50S ribosomal subunit.

Binds to the 23S rRNA. The chain is Large ribosomal subunit protein uL15 from Burkholderia cenocepacia (strain HI2424).